The following is a 179-amino-acid chain: Adenine phosphoribosyltransferase (179 aa).

The protein belongs to the purine/pyrimidine phosphoribosyltransferase family. In terms of assembly, homodimer.

It localises to the cytoplasm. It catalyses the reaction AMP + diphosphate = 5-phospho-alpha-D-ribose 1-diphosphate + adenine. The protein operates within purine metabolism; AMP biosynthesis via salvage pathway; AMP from adenine: step 1/1. Functionally, catalyzes a salvage reaction resulting in the formation of AMP, that is energically less costly than de novo synthesis. This is Adenine phosphoribosyltransferase from Helicobacter pylori (strain ATCC 700392 / 26695) (Campylobacter pylori).